Consider the following 364-residue polypeptide: Spermidine/putrescine import ATP-binding protein PotA (364 aa).

The ABC transporter domain maps to 6 to 236 (IEIRQIYKSY…PANLHVAMFI (231 aa)). Residue 38–45 (GPSGCGKT) coordinates ATP.

The protein belongs to the ABC transporter superfamily. Spermidine/putrescine importer (TC 3.A.1.11.1) family. In terms of assembly, the complex is composed of two ATP-binding proteins (PotA), two transmembrane proteins (PotB and PotC) and a solute-binding protein (PotD).

The protein resides in the cell inner membrane. It carries out the reaction ATP + H2O + polyamine-[polyamine-binding protein]Side 1 = ADP + phosphate + polyamineSide 2 + [polyamine-binding protein]Side 1.. Functionally, part of the ABC transporter complex PotABCD involved in spermidine/putrescine import. Responsible for energy coupling to the transport system. This chain is Spermidine/putrescine import ATP-binding protein PotA, found in Legionella pneumophila subsp. pneumophila (strain Philadelphia 1 / ATCC 33152 / DSM 7513).